Reading from the N-terminus, the 701-residue chain is Polyribonucleotide nucleotidyltransferase (701 aa).

Mg(2+) is bound by residues Asp-487 and Asp-493. The 60-residue stretch at 554-613 (PTMIAMKIDTDKIRDVIGKGGATIRAICEETKASIDIEDDGSIKIFGESKEAAEAARQRV) folds into the KH domain. The region spanning 623–691 (GKIYLGKVER…NRGRIKLSIK (69 aa)) is the S1 motif domain.

The protein belongs to the polyribonucleotide nucleotidyltransferase family. As to quaternary structure, component of the RNA degradosome, which is a multiprotein complex involved in RNA processing and mRNA degradation. The cofactor is Mg(2+).

It localises to the cytoplasm. It carries out the reaction RNA(n+1) + phosphate = RNA(n) + a ribonucleoside 5'-diphosphate. Involved in mRNA degradation. Catalyzes the phosphorolysis of single-stranded polyribonucleotides processively in the 3'- to 5'-direction. This Pseudomonas syringae pv. tomato (strain ATCC BAA-871 / DC3000) protein is Polyribonucleotide nucleotidyltransferase.